The chain runs to 384 residues: Succinyl-diaminopimelate desuccinylase (384 aa).

Position 69 (His-69) interacts with Zn(2+). The active site involves Asp-71. Residue Asp-103 participates in Zn(2+) binding. The active-site Proton acceptor is Glu-137. Glu-138, Glu-166, and His-355 together coordinate Zn(2+).

Belongs to the peptidase M20A family. DapE subfamily. Homodimer. It depends on Zn(2+) as a cofactor. Requires Co(2+) as cofactor.

It catalyses the reaction N-succinyl-(2S,6S)-2,6-diaminopimelate + H2O = (2S,6S)-2,6-diaminopimelate + succinate. The protein operates within amino-acid biosynthesis; L-lysine biosynthesis via DAP pathway; LL-2,6-diaminopimelate from (S)-tetrahydrodipicolinate (succinylase route): step 3/3. In terms of biological role, catalyzes the hydrolysis of N-succinyl-L,L-diaminopimelic acid (SDAP), forming succinate and LL-2,6-diaminopimelate (DAP), an intermediate involved in the bacterial biosynthesis of lysine and meso-diaminopimelic acid, an essential component of bacterial cell walls. This chain is Succinyl-diaminopimelate desuccinylase, found in Rickettsia canadensis (strain McKiel).